A 237-amino-acid polypeptide reads, in one-letter code: Uridylate kinase (237 aa).

Lys9–Gly12 provides a ligand contact to ATP. Residue Gly51 participates in UMP binding. Residues Gly52 and Arg56 each contribute to the ATP site. UMP contacts are provided by residues Asp71 and Cys132–Thr139. Positions 159, 165, and 168 each coordinate ATP.

It belongs to the UMP kinase family. Homohexamer.

It localises to the cytoplasm. The enzyme catalyses UMP + ATP = UDP + ADP. Its pathway is pyrimidine metabolism; CTP biosynthesis via de novo pathway; UDP from UMP (UMPK route): step 1/1. Inhibited by UTP. Its function is as follows. Catalyzes the reversible phosphorylation of UMP to UDP. In Prochlorococcus marinus (strain NATL1A), this protein is Uridylate kinase.